The chain runs to 194 residues: Protein LKAAEAR1 (194 aa).

The tract at residues 1–45 is disordered; the sequence is MPPPAKEGGRKGPRERSGKSAPGTAQGEERAKGAPATEPPKPGWA. Positions 7-18 are enriched in basic and acidic residues; it reads EGGRKGPRERSG.

The chain is Protein LKAAEAR1 (LKAAEAR1) from Homo sapiens (Human).